The primary structure comprises 186 residues: Ribosome-recycling factor (186 aa).

This sequence belongs to the RRF family.

Its subcellular location is the cytoplasm. In terms of biological role, responsible for the release of ribosomes from messenger RNA at the termination of protein biosynthesis. May increase the efficiency of translation by recycling ribosomes from one round of translation to another. This chain is Ribosome-recycling factor, found in Beijerinckia indica subsp. indica (strain ATCC 9039 / DSM 1715 / NCIMB 8712).